A 138-amino-acid chain; its full sequence is Large ribosomal subunit protein uL16 (138 aa).

Basic residues predominate over residues 1–13 (MLQPSRRKYRKEQ). Residues 1–24 (MLQPSRRKYRKEQKGRNTGLASRG) form a disordered region.

It belongs to the universal ribosomal protein uL16 family. In terms of assembly, part of the 50S ribosomal subunit.

Functionally, binds 23S rRNA and is also seen to make contacts with the A and possibly P site tRNAs. The protein is Large ribosomal subunit protein uL16 of Bordetella bronchiseptica (strain ATCC BAA-588 / NCTC 13252 / RB50) (Alcaligenes bronchisepticus).